A 436-amino-acid polypeptide reads, in one-letter code: Prenyltransferase nscD (436 aa).

The protein belongs to the tryptophan dimethylallyltransferase family.

It functions in the pathway secondary metabolite biosynthesis. In terms of biological role, prenyltransferase; part of the gene cluster that mediates the biosynthesis of neosartoricin B, a prenylated anthracenone that probably exhibits T-cell antiproliferative activity, suggestive of a physiological role as an immunosuppressive agent. The non-reducing polyketide synthase nscA probably synthesizes and cyclizes the decaketide backbone. The hydrolase nscB then mediates the product release through hydrolysis followed by spontaneous decarboxylation. The prenyltransferase nscD catalyzes the addition of the dimethylallyl group to the aromatic C5. The FAD-dependent monooxygenase nscC is then responsible for the stereospecific hydroxylation at C2. Neosartoricin B can be converted into two additional compounds neosartoricins C and D. Neosartoricin C is a spirocyclic compound that is cyclized through the attack of C3 hydroxyl on C14, followed by dehydration. On the other hand, neosartoricin D is a further cyclized compound in which attack of C2 on C14 in neosartoricin C results in the formation of the acetal-containing dioxabicyclo-octanone ring. Both of these compounds are novel and possibly represent related metabolites of the gene cluster. The polypeptide is Prenyltransferase nscD (Trichophyton equinum (strain ATCC MYA-4606 / CBS 127.97) (Horse ringworm fungus)).